A 1568-amino-acid chain; its full sequence is Plexin-C1 (1568 aa).

Residues 1 to 34 (MEVSRRKAPPRPPRPAAPLPLLAYLLALAAPGRG) form the signal peptide. The Sema domain occupies 35–452 (ADEPVWRSEQ…AGKEVRRIRV (418 aa)). The Extracellular portion of the chain corresponds to 35–944 (ADEPVWRSEQ…YVEQESVPST (910 aa)). The cysteines at positions 64 and 87 are disulfide-linked. Residues asparagine 86, asparagine 141, and asparagine 149 are each glycosylated (N-linked (GlcNAc...) asparagine). 3 cysteine pairs are disulfide-bonded: cysteine 156/cysteine 194, cysteine 226/cysteine 354, and cysteine 283/cysteine 329. N-linked (GlcNAc...) asparagine glycans are attached at residues asparagine 241 and asparagine 252. N-linked (GlcNAc...) asparagine glycosylation is found at asparagine 386 and asparagine 407. Disulfide bonds link cysteine 455-cysteine 472, cysteine 461-cysteine 506, cysteine 464-cysteine 481, and cysteine 475-cysteine 487. Asparagine 548, asparagine 582, asparagine 653, asparagine 692, asparagine 771, asparagine 796, asparagine 821, asparagine 871, and asparagine 890 each carry an N-linked (GlcNAc...) asparagine glycan. Residues 945–965 (WYFLIVLPVLLVIVIFAAVGV) traverse the membrane as a helical segment. At 966-1568 (TRHKSKELSR…FDEKKKCKWM (603 aa)) the chain is on the cytoplasmic side. Serine 978 bears the Phosphoserine mark.

This sequence belongs to the plexin family. Monomer. Homodimer. Interacts with SEMA7A. Post-translationally, N-glycosylated. As to expression, detected in heart, brain, lung, spleen and placenta.

It is found in the membrane. Functionally, receptor for SEMA7A, for smallpox semaphorin A39R, vaccinia virus semaphorin A39R and for herpesvirus Sema protein. Binding of semaphorins triggers cellular responses leading to the rearrangement of the cytoskeleton and to secretion of IL6 and IL8. The protein is Plexin-C1 (PLXNC1) of Homo sapiens (Human).